The following is an 803-amino-acid chain: Translation initiation factor IF-2 (803 aa).

Disordered stretches follow at residues 95-125 (PVVE…EKAE) and 138-178 (EVKE…EREE). Over residues 111 to 121 (VPLTSDTTNLN) the composition is skewed to polar residues. The segment covering 138 to 155 (EVKEEAKKTPSEKKETPK) has biased composition (basic and acidic residues). Basic residues predominate over residues 156-167 (KGPRKETRRSRK). The segment covering 168-178 (PDKEDKWEREE) has biased composition (basic and acidic residues). A tr-type G domain is found at 302–471 (PRAPVVTIMG…LLQAEVLELK (170 aa)). Residues 311–318 (GHVDHGKT) are G1. Residue 311 to 318 (GHVDHGKT) coordinates GTP. The G2 stretch occupies residues 336 to 340 (GITQH). The interval 357–360 (DTPG) is G3. GTP-binding positions include 357-361 (DTPGH) and 411-414 (NKID). The interval 411–414 (NKID) is G4. The G5 stretch occupies residues 447–449 (SAK).

This sequence belongs to the TRAFAC class translation factor GTPase superfamily. Classic translation factor GTPase family. IF-2 subfamily.

Its subcellular location is the cytoplasm. In terms of biological role, one of the essential components for the initiation of protein synthesis. Protects formylmethionyl-tRNA from spontaneous hydrolysis and promotes its binding to the 30S ribosomal subunits. Also involved in the hydrolysis of GTP during the formation of the 70S ribosomal complex. This chain is Translation initiation factor IF-2, found in Coxiella burnetii (strain Dugway 5J108-111).